Consider the following 258-residue polypeptide: Acyl-[acyl-carrier-protein]--UDP-N-acetylglucosamine O-acyltransferase (258 aa).

It belongs to the transferase hexapeptide repeat family. LpxA subfamily. Homotrimer.

The protein localises to the cytoplasm. It catalyses the reaction a (3R)-hydroxyacyl-[ACP] + UDP-N-acetyl-alpha-D-glucosamine = a UDP-3-O-[(3R)-3-hydroxyacyl]-N-acetyl-alpha-D-glucosamine + holo-[ACP]. It participates in glycolipid biosynthesis; lipid IV(A) biosynthesis; lipid IV(A) from (3R)-3-hydroxytetradecanoyl-[acyl-carrier-protein] and UDP-N-acetyl-alpha-D-glucosamine: step 1/6. Functionally, involved in the biosynthesis of lipid A, a phosphorylated glycolipid that anchors the lipopolysaccharide to the outer membrane of the cell. The chain is Acyl-[acyl-carrier-protein]--UDP-N-acetylglucosamine O-acyltransferase from Pseudomonas fluorescens (strain SBW25).